Consider the following 663-residue polypeptide: MNWLSSSSGVVLTAYHPSGKDQVAGDSHVKGGDEATSSRRYGQYTINQEGSTKVPERPPFDRSSSQDSLDESMEAYWTELENIKRSNENRQEGQEAIVVKEPDEGELEEEWLKEAGLSNLFGESIDDPQESILFLSTLTRTQAAAVQKRVETVSQTLRKKNKQHHIRDVRDIFAQQREAQEKPPDDSDLRSVRTNENKGQGKDDQPSSGAVDSKEQISRVPEDTPASETDINLEVSFAEQAVNQKEFSKERTQKISSNDSLPSFRLPKDKTGTTRIGDLAPQDMKKVCSLSLIELTALYDVLGLEFKQQKAVKIKTRDSGLFGIPLTILLEQDQRKVPGTRIPLIFQKLISRIEEGSLETEGLLRIPGAAMRIKNLCQELEAKFYEGTFNWESVKQHDAASLLKLFLRELPQPLLSMEYLKAFQAVQNLPTRKEQLQALNLLVILLPDANRDTLKALLEFLQRVIDNKEKNKMTAGNVAMVMAPNLFMCHTLGLKSSEQREFEMAAGTANVMHLLIRYQKILWTIPKFIVIQVRKQNIENQKKERKAMKKLLKKMAYDREKHEKQDKTANGADVPQGVIRVQAPHLSKVSMAIQLTEELKASDVLARFLSQESGVAQTLKKGEVFLYEIGGNIGERCLDDDTHMKDLYQLNPNAEWVIKSKPV.

Disordered regions lie at residues 14–73 (AYHP…DESM) and 85–106 (RSNE…DEGE). Positions 27-37 (SHVKGGDEATS) are enriched in basic and acidic residues. Positions 38 to 51 (SRRYGQYTINQEGS) are enriched in polar residues. Residues S65 and S68 each carry the phosphoserine modification. Basic and acidic residues predominate over residues 85–102 (RSNENRQEGQEAIVVKEP). Position 156 is a phosphothreonine (T156). Disordered stretches follow at residues 173-228 (FAQQ…PASE) and 245-277 (KEFS…TRIG). Composition is skewed to basic and acidic residues over residues 178 to 205 (EAQE…KDDQ) and 212 to 222 (DSKEQISRVPE). Residues S260 and S263 each carry the phosphoserine modification. A Rho-GAP domain is found at 324-523 (IPLTILLEQD…LLIRYQKILW (200 aa)). The residue at position 610 (S610) is a Phosphoserine.

As to quaternary structure, interacts with MPHOSPH6. As to expression, widely expressed: expressed in most organs, except small intestine.

It localises to the cytoplasm. Its function is as follows. Rho GTPase activating protein that suppresses F-actin polymerization by inhibiting Rho. Rho GTPase activating proteins act by converting Rho-type GTPases to an inactive GDP-bound state. Plays a key role in tissue tension and 3D tissue shape by regulating cortical actomyosin network formation. Acts downstream of YAP1 and inhibits actin polymerization, which in turn reduces nuclear localization of YAP1. Regulates cell shape, spreading, and migration. This chain is Rho GTPase-activating protein 18, found in Mus musculus (Mouse).